Here is a 391-residue protein sequence, read N- to C-terminus: Argininosuccinate synthase (391 aa).

6–14 lines the ATP pocket; it reads AYSGGLDTT. Y84 lines the L-citrulline pocket. Position 114 (G114) interacts with ATP. 3 residues coordinate L-aspartate: T116, N120, and D121. L-citrulline is bound at residue N120. L-citrulline-binding residues include R124, S171, S180, E253, and Y265.

The protein belongs to the argininosuccinate synthase family. Type 1 subfamily. Homotetramer.

The protein resides in the cytoplasm. It catalyses the reaction L-citrulline + L-aspartate + ATP = 2-(N(omega)-L-arginino)succinate + AMP + diphosphate + H(+). Its pathway is amino-acid biosynthesis; L-arginine biosynthesis; L-arginine from L-ornithine and carbamoyl phosphate: step 2/3. The sequence is that of Argininosuccinate synthase from Metallosphaera sedula (strain ATCC 51363 / DSM 5348 / JCM 9185 / NBRC 15509 / TH2).